The chain runs to 626 residues: Zinc finger protein 471 (626 aa).

In terms of domain architecture, KRAB spans 14–85; the sequence is VTFKDVAIDF…TSEMTRSPFS (72 aa). 15 consecutive C2H2-type zinc fingers follow at residues 206–228, 234–256, 262–284, 290–312, 318–340, 346–369, 375–397, 403–425, 431–453, 459–481, 487–509, 515–537, 543–565, 571–593, and 599–621; these read FKCN…FRIH, YACE…HRTH, FECK…QRIH, YKCK…QRIH, YECK…QRCH, YECI…RSYH, FNCI…RRIH, YKCG…QRIH, YECD…QRVH, YECK…LRIH, YECK…QRIH, YECI…QKTH, YECN…QRIH, YKCT…QRLH, and YQCF…QRSH.

It belongs to the krueppel C2H2-type zinc-finger protein family.

It localises to the nucleus. Functionally, may be involved in transcriptional regulation. This Homo sapiens (Human) protein is Zinc finger protein 471 (ZNF471).